A 110-amino-acid polypeptide reads, in one-letter code: Secreted RxLR effector protein 89 (110 aa).

The signal sequence occupies residues 1–22 (MTSVVIVVSVAVLLGVLVITDS). A glycan (N-linked (GlcNAc...) asparagine) is linked at Asn-29. The short motif at 61 to 74 (RHLRTILQWWQERR) is the RxLR-dEER element.

This sequence belongs to the RxLR effector family.

The protein localises to the secreted. It localises to the host nucleus. The protein resides in the host cytoplasm. Its function is as follows. Secreted effector that completely suppresses the host cell death induced by cell death-inducing proteins. This chain is Secreted RxLR effector protein 89, found in Plasmopara viticola (Downy mildew of grapevine).